Reading from the N-terminus, the 217-residue chain is Ribonuclease T (217 aa).

Residues 20 to 194 (VVIDVETGGF…YDTDRTAELF (175 aa)) form the Exonuclease domain. 4 residues coordinate Mg(2+): aspartate 23, glutamate 25, histidine 181, and aspartate 186. The active-site Proton donor/acceptor is histidine 181.

This sequence belongs to the RNase T family. As to quaternary structure, homodimer. Requires Mg(2+) as cofactor.

Its function is as follows. Trims short 3' overhangs of a variety of RNA species, leaving a one or two nucleotide 3' overhang. Responsible for the end-turnover of tRNA: specifically removes the terminal AMP residue from uncharged tRNA (tRNA-C-C-A). Also appears to be involved in tRNA biosynthesis. The chain is Ribonuclease T from Photorhabdus laumondii subsp. laumondii (strain DSM 15139 / CIP 105565 / TT01) (Photorhabdus luminescens subsp. laumondii).